A 252-amino-acid polypeptide reads, in one-letter code: JmjC domain-containing protein A (252 aa).

A JmjC domain is found at 103-252 (PYLRNFGMLD…VSCWGKEMIM (150 aa)).

This is JmjC domain-containing protein A (jcdA) from Dictyostelium discoideum (Social amoeba).